A 524-amino-acid polypeptide reads, in one-letter code: GMP synthase [glutamine-hydrolyzing] (524 aa).

In terms of domain architecture, Glutamine amidotransferase type-1 spans 9-207 (RILILDFGSQ…VIHICQCIPN (199 aa)). The Nucleophile role is filled by cysteine 86. Residues histidine 181 and glutamate 183 contribute to the active site. The 192-residue stretch at 208–399 (WTTKHIIEDS…LGLPADLIYR (192 aa)) folds into the GMPS ATP-PPase domain. 235-241 (SGGVDSA) provides a ligand contact to ATP.

Homodimer.

The enzyme catalyses XMP + L-glutamine + ATP + H2O = GMP + L-glutamate + AMP + diphosphate + 2 H(+). It participates in purine metabolism; GMP biosynthesis; GMP from XMP (L-Gln route): step 1/1. Functionally, catalyzes the synthesis of GMP from XMP. This chain is GMP synthase [glutamine-hydrolyzing], found in Coxiella burnetii (strain RSA 493 / Nine Mile phase I).